A 524-amino-acid chain; its full sequence is Glucose-6-phosphate isomerase (524 aa).

The Proton donor role is filled by glutamate 322. Catalysis depends on residues histidine 351 and lysine 453.

This sequence belongs to the GPI family.

The protein localises to the cytoplasm. The catalysed reaction is alpha-D-glucose 6-phosphate = beta-D-fructose 6-phosphate. It participates in carbohydrate biosynthesis; gluconeogenesis. It functions in the pathway carbohydrate degradation; glycolysis; D-glyceraldehyde 3-phosphate and glycerone phosphate from D-glucose: step 2/4. In terms of biological role, catalyzes the reversible isomerization of glucose-6-phosphate to fructose-6-phosphate. This Prochlorococcus marinus (strain NATL2A) protein is Glucose-6-phosphate isomerase.